Reading from the N-terminus, the 77-residue chain is Acyl carrier protein (77 aa).

Positions 1-76 (MAVFEDVRDV…DVVNYIEKLG (76 aa)) constitute a Carrier domain. Serine 36 carries the O-(pantetheine 4'-phosphoryl)serine modification.

Belongs to the acyl carrier protein (ACP) family. 4'-phosphopantetheine is transferred from CoA to a specific serine of apo-ACP by AcpS. This modification is essential for activity because fatty acids are bound in thioester linkage to the sulfhydryl of the prosthetic group.

It is found in the cytoplasm. Its pathway is lipid metabolism; fatty acid biosynthesis. In terms of biological role, carrier of the growing fatty acid chain in fatty acid biosynthesis. The protein is Acyl carrier protein of Campylobacter concisus (strain 13826).